The following is a 328-amino-acid chain: RNA binding protein fox-1 homolog 3 (328 aa).

Pro residues predominate over residues 1 to 30 (MAQPYPPAQYPPPPQNGIPAEYAPPPPHPT). The tract at residues 1-106 (MAQPYPPAQY…QPKRLHVSNI (106 aa)) is disordered. The span at 49–87 (TPAQTHPEQPSSDTSTQPITGAQTVPQTDEAAQTDSQPL) shows a compositional bias: polar residues. The 74-residue stretch at 99-172 (KRLHVSNIPF…NPVVGAVYGP (74 aa)) folds into the RRM domain. Position 192 is an asymmetric dimethylarginine; alternate (Arg192). The residue at position 192 (Arg192) is an Omega-N-methylarginine; alternate. The residue at position 288 (Arg288) is an Asymmetric dimethylarginine.

It localises to the nucleus. The protein resides in the cytoplasm. Pre-mRNA alternative splicing regulator. Regulates alternative splicing of RBFOX2 to enhance the production of mRNA species that are targeted for nonsense-mediated decay (NMD). The sequence is that of RNA binding protein fox-1 homolog 3 (RBFOX3) from Bos taurus (Bovine).